A 34-amino-acid polypeptide reads, in one-letter code: Egg-releasing peptide (34 aa).

This chain is Egg-releasing peptide, found in Aplysia californica (California sea hare).